Consider the following 64-residue polypeptide: Delta-buthitoxin-Hj2a (64 aa).

4 disulfide bridges follow: Cys-12–Cys-63, Cys-16–Cys-36, Cys-22–Cys-46, and Cys-26–Cys-48. Arginine amide is present on Arg-64.

Belongs to the long (4 C-C) scorpion toxin superfamily. Sodium channel inhibitor family. Alpha subfamily. In terms of tissue distribution, expressed by the venom gland.

The protein localises to the secreted. Its function is as follows. This non-amidated recombinant toxin slows fast inactivation on Nav1.1/SCN1A (EC(50)=52.8 nM), Nav1.4/SN4A (EC(50)=32 nM), Nav1.5/SCN5A (EC(50)=116.7 nM), Nav1.6/SCN8A (EC(50)=46.3 nM), and Nav1.7/SCN9A (EC(50)=147.4 nM) voltage-gated sodium channels. On Nav1.1/SCN1A channel, acts as an agonist by inducing a shift in both the voltage dependence of channel inactivation (alpha-toxin activity) and activation (beta-toxin activity). This is Delta-buthitoxin-Hj2a from Hottentotta judaicus (Black scorpion).